We begin with the raw amino-acid sequence, 318 residues long: Ribosomal RNA small subunit methyltransferase H (318 aa).

Residues 35–37 (GGH), Asp54, Phe83, Asp104, and Gln111 each bind S-adenosyl-L-methionine.

It belongs to the methyltransferase superfamily. RsmH family.

The protein localises to the cytoplasm. It catalyses the reaction cytidine(1402) in 16S rRNA + S-adenosyl-L-methionine = N(4)-methylcytidine(1402) in 16S rRNA + S-adenosyl-L-homocysteine + H(+). Functionally, specifically methylates the N4 position of cytidine in position 1402 (C1402) of 16S rRNA. This is Ribosomal RNA small subunit methyltransferase H from Latilactobacillus sakei subsp. sakei (strain 23K) (Lactobacillus sakei subsp. sakei).